Reading from the N-terminus, the 683-residue chain is Methionine--tRNA ligase (683 aa).

The 'HIGH' region motif lies at Tyr-15–Asn-25. Residues Lys-311–Ser-315 carry the 'KMSKS' region motif. An ATP-binding site is contributed by Lys-314. One can recognise a tRNA-binding domain in the interval Asp-581–Ser-683.

It belongs to the class-I aminoacyl-tRNA synthetase family. MetG type 2B subfamily. In terms of assembly, homodimer.

It is found in the cytoplasm. It carries out the reaction tRNA(Met) + L-methionine + ATP = L-methionyl-tRNA(Met) + AMP + diphosphate. Is required not only for elongation of protein synthesis but also for the initiation of all mRNA translation through initiator tRNA(fMet) aminoacylation. The sequence is that of Methionine--tRNA ligase from Lactiplantibacillus plantarum (strain ATCC BAA-793 / NCIMB 8826 / WCFS1) (Lactobacillus plantarum).